The primary structure comprises 99 residues: Transmembrane protein 14A (99 aa).

3 consecutive transmembrane segments (helical) span residues 1–21 (MDLIGFGYAALVTFGSILGYK), 24–44 (GGVLSLIAGLFVGFLAGYGAY), and 79–99 (PAGLVAGLSLLMILRLVLLLL).

Belongs to the TMEM14 family.

The protein resides in the mitochondrion membrane. It localises to the endoplasmic reticulum membrane. Inhibits apoptosis via negative regulation of the mitochondrial outer membrane permeabilization involved in apoptotic signaling pathway. The sequence is that of Transmembrane protein 14A (TMEM14A) from Bos taurus (Bovine).